A 98-amino-acid polypeptide reads, in one-letter code: NADH-ubiquinone oxidoreductase chain 4L (98 aa).

The next 3 membrane-spanning stretches (helical) occupy residues 2–22, 26–46, and 59–79; these read QMTM…LLMF, FMSS…LMSI, and FPLV…SLLV.

It belongs to the complex I subunit 4L family. In terms of assembly, core subunit of respiratory chain NADH dehydrogenase (Complex I) which is composed of 45 different subunits.

It is found in the mitochondrion inner membrane. It carries out the reaction a ubiquinone + NADH + 5 H(+)(in) = a ubiquinol + NAD(+) + 4 H(+)(out). In terms of biological role, core subunit of the mitochondrial membrane respiratory chain NADH dehydrogenase (Complex I) which catalyzes electron transfer from NADH through the respiratory chain, using ubiquinone as an electron acceptor. Part of the enzyme membrane arm which is embedded in the lipid bilayer and involved in proton translocation. The polypeptide is NADH-ubiquinone oxidoreductase chain 4L (MT-ND4L) (Echinosorex gymnura (Moon rat)).